A 474-amino-acid chain; its full sequence is NAD(P) transhydrogenase subunit beta (474 aa).

9 helical membrane-spanning segments follow: residues 4-24, 46-66, 83-103, 132-152, 181-200, 202-222, 229-249, 253-273, and 321-341; these read GLVQ…LAGL, IATI…AMII, MPEL…LVGF, VLTN…AVTF, LAAL…NPES, FPVL…VASI, VVVS…GFIL, LLIV…YIMC, and VIIT…VADI.

Belongs to the PNT beta subunit family. As to quaternary structure, heterodimer of an alpha and a beta chain.

The protein resides in the cell inner membrane. The enzyme catalyses NAD(+) + NADPH + H(+)(in) = NADH + NADP(+) + H(+)(out). Its function is as follows. The transhydrogenation between NADH and NADP is coupled to respiration and ATP hydrolysis and functions as a proton pump across the membrane. The polypeptide is NAD(P) transhydrogenase subunit beta (pntB) (Haemophilus influenzae (strain ATCC 51907 / DSM 11121 / KW20 / Rd)).